Here is a 134-residue protein sequence, read N- to C-terminus: DNA-binding protein inhibitor ID-2 (134 aa).

Residues S14 and S25 each carry the phosphoserine modification. A bHLH domain is found at 23–75 (SRSKTPVDDPMSLLYNMNDCYSKLKELVPSIPQNKKVSKMEILQHVIDYILDL). The Nuclear export signal signature appears at 106–115 (LNTDISILSL).

In terms of assembly, interacts with GATA4 and NKX2-5. Interacts with NR0B2. Interacts with CLOCK and BMAL1. Interacts with IFI204. Interacts with NEDD9/HEF1. Interacts with ASB4; this interaction promotes ID2 proteasomal degradation. In terms of processing, ubiquitinated in a ASB4-depedent manner, leading to proteasomal degradation. Phosphorylated in vitro by CDK1, PKA and PKC.

The protein resides in the cytoplasm. It is found in the nucleus. Transcriptional regulator (lacking a basic DNA binding domain) which negatively regulates the basic helix-loop-helix (bHLH) transcription factors by forming heterodimers and inhibiting their DNA binding and transcriptional activity. Implicated in regulating a variety of cellular processes, including cellular growth, senescence, differentiation, apoptosis, angiogenesis, and neoplastic transformation. Inhibits skeletal muscle and cardiac myocyte differentiation. Regulates the circadian clock by repressing the transcriptional activator activity of the CLOCK-BMAL1 heterodimer. Restricts the CLOCK and BMAL1 localization to the cytoplasm. Plays a role in both the input and output pathways of the circadian clock: in the input component, is involved in modulating the magnitude of photic entrainment and in the output component, contributes to the regulation of a variety of liver clock-controlled genes involved in lipid metabolism. The sequence is that of DNA-binding protein inhibitor ID-2 (ID2) from Sus scrofa (Pig).